The chain runs to 425 residues: Enolase (425 aa).

The segment at 31–54 (TGSAIVPSGASTGEKEAVELRDSD) is disordered. A compositionally biased stretch (basic and acidic residues) spans 43 to 54 (GEKEAVELRDSD). Position 162 (Q162) interacts with (2R)-2-phosphoglycerate. E204 acts as the Proton donor in catalysis. Mg(2+)-binding residues include D241, E285, and D312. The (2R)-2-phosphoglycerate site is built by K337, R366, S367, and K388. The active-site Proton acceptor is K337.

This sequence belongs to the enolase family. Requires Mg(2+) as cofactor.

It is found in the cytoplasm. Its subcellular location is the secreted. The protein localises to the cell surface. It catalyses the reaction (2R)-2-phosphoglycerate = phosphoenolpyruvate + H2O. It functions in the pathway carbohydrate degradation; glycolysis; pyruvate from D-glyceraldehyde 3-phosphate: step 4/5. In terms of biological role, catalyzes the reversible conversion of 2-phosphoglycerate (2-PG) into phosphoenolpyruvate (PEP). It is essential for the degradation of carbohydrates via glycolysis. The sequence is that of Enolase from Gloeobacter violaceus (strain ATCC 29082 / PCC 7421).